Consider the following 151-residue polypeptide: Globin CTT-IIIA (151 aa).

The 140-residue stretch at 8-147 (SMTDAQVAAV…MFHVIFNALD (140 aa)) folds into the Globin domain. Histidine 98 serves as a coordination point for heme b.

The protein belongs to the globin family. Monomer.

The protein is Globin CTT-IIIA of Chironomus thummi thummi (Midge).